Reading from the N-terminus, the 490-residue chain is Ribulose bisphosphate carboxylase large chain (490 aa).

Residues N127 and T177 each contribute to the substrate site. Residue K179 is the Proton acceptor of the active site. K181 lines the substrate pocket. Positions 205, 207, and 208 each coordinate Mg(2+). K205 carries the N6-carboxylysine modification. H297 serves as the catalytic Proton acceptor. R298, H330, and S382 together coordinate substrate.

The protein belongs to the RuBisCO large chain family. Type I subfamily. Heterohexadecamer of 8 large chains and 8 small chains. Mg(2+) serves as cofactor.

Its subcellular location is the plastid. It is found in the chloroplast. The catalysed reaction is 2 (2R)-3-phosphoglycerate + 2 H(+) = D-ribulose 1,5-bisphosphate + CO2 + H2O. It catalyses the reaction D-ribulose 1,5-bisphosphate + O2 = 2-phosphoglycolate + (2R)-3-phosphoglycerate + 2 H(+). In terms of biological role, ruBisCO catalyzes two reactions: the carboxylation of D-ribulose 1,5-bisphosphate, the primary event in carbon dioxide fixation, as well as the oxidative fragmentation of the pentose substrate in the photorespiration process. Both reactions occur simultaneously and in competition at the same active site. This is Ribulose bisphosphate carboxylase large chain from Detonula confervacea (Marine diatom).